A 381-amino-acid chain; its full sequence is Hydrogenase nickel incorporation protein HupN (381 aa).

Residues 1-39 (MLPFSMTGLEKDHTRGVLILANAHRRSERSRTASCAGPA) lie on the Cytoplasmic side of the membrane. The helical transmembrane segment at 40–60 (VLFGGLITANIVAWAWAFALF) threads the bilayer. Residues 61–63 (ADR) are Periplasmic-facing. The helical transmembrane segment at 64-84 (PVVMATALLAWVFGLRHAVDA) threads the bilayer. At 85-110 (DHIAAIDNVVRSLMQTGGTPRSAGLY) the chain is on the cytoplasmic side. Residues 111 to 131 (FALGHSSVVVVATMLLALGVV) traverse the membrane as a helical segment. Over 132–149 (SLGGDGLLKEIGSFIGAS) the chain is Periplasmic. A helical transmembrane segment spans residues 150–170 (VSALFLLVIAAINLAIFASLW). The Cytoplasmic segment spans residues 171-215 (RTFRKAREQGIRDAAGLDALLAHRGILVRLLGPMFRLVTKPWHMY). The chain crosses the membrane as a helical span at residues 216 to 236 (PLGFLFGLGFDTATEIGLLSI). Residues 237 to 243 (SASEAAR) are Periplasmic-facing. A helical transmembrane segment spans residues 244-264 (GASLADVMVFPALFAAGMALV). The Cytoplasmic segment spans residues 265–292 (DTADSTLMVSAYRWAFVDPMRKLWYNLT). Residues 293–313 (ITGASVAVALFIGGIEALGLI) traverse the membrane as a helical segment. The Periplasmic segment spans residues 314–333 (GNRLDLSGGVWTLIDALNES). Residues 334-354 (LANVGLAVIALFAIAWLLSIV) traverse the membrane as a helical segment. The Cytoplasmic portion of the chain corresponds to 355 to 381 (LYRRLIAGSSGLADTEVLECADATEAV).

This sequence belongs to the NiCoT transporter (TC 2.A.52) family.

The protein localises to the cell inner membrane. Its function is as follows. Involved in nickel incorporation/metabolism into the hydrogenase apoprotein. This chain is Hydrogenase nickel incorporation protein HupN (hupN), found in Bradyrhizobium diazoefficiens (strain JCM 10833 / BCRC 13528 / IAM 13628 / NBRC 14792 / USDA 110).